Reading from the N-terminus, the 276-residue chain is NAD kinase (276 aa).

The active-site Proton acceptor is the aspartate 68. Residues 68 to 69 (DG), arginine 73, 138 to 139 (NE), lysine 149, aspartate 168, 179 to 184 (TAYSLS), and glutamine 237 contribute to the NAD(+) site.

This sequence belongs to the NAD kinase family. A divalent metal cation is required as a cofactor.

Its subcellular location is the cytoplasm. It carries out the reaction NAD(+) + ATP = ADP + NADP(+) + H(+). Functionally, involved in the regulation of the intracellular balance of NAD and NADP, and is a key enzyme in the biosynthesis of NADP. Catalyzes specifically the phosphorylation on 2'-hydroxyl of the adenosine moiety of NAD to yield NADP. This chain is NAD kinase, found in Methanopyrus kandleri (strain AV19 / DSM 6324 / JCM 9639 / NBRC 100938).